Consider the following 420-residue polypeptide: Meiotically up-regulated gene 137 protein (420 aa).

In terms of domain architecture, BAR spans 10 to 232 (NEKPLGDQRA…QNSLTPQKKI (223 aa)). Positions 279-345 (KETVFVKAIY…PVNYCTRIYD (67 aa)) constitute an SH3 domain. A disordered region spans residues 398-420 (SQNVEASSQPIKIRKPLPEIPNK).

Its subcellular location is the cytoplasm. It is found in the nucleus. In terms of biological role, has a role in meiosis and sporulation. In Schizosaccharomyces pombe (strain 972 / ATCC 24843) (Fission yeast), this protein is Meiotically up-regulated gene 137 protein (mug137).